The sequence spans 87 residues: Neurotoxin Cex4 (87 aa).

An N-terminal signal peptide occupies residues 1–19 (MNSLLMITACLFLIGTVWA). Residues 20 to 85 (KEGYLVNKST…TYPLPNKSCG (66 aa)) form the LCN-type CS-alpha/beta domain. Disulfide bonds link cysteine 31–cysteine 84, cysteine 35–cysteine 60, cysteine 44–cysteine 65, and cysteine 48–cysteine 67. Cysteine amide is present on cysteine 84. Residues 85 to 87 (GRK) constitute a propeptide that is removed on maturation.

The protein belongs to the long (4 C-C) scorpion toxin superfamily. Sodium channel inhibitor family. Beta subfamily. As to expression, expressed by the venom gland.

Its subcellular location is the secreted. Its function is as follows. Beta toxins bind voltage-independently at site-4 of sodium channels (Nav) and shift the voltage of activation toward more negative potentials thereby affecting sodium channel activation and promoting spontaneous and repetitive firing. This Centruroides exilicauda (Bark scorpion) protein is Neurotoxin Cex4.